The primary structure comprises 473 residues: Bifunctional protein HldE (473 aa).

Residues 1-317 (MKLSMPRFDQ…RRAIQREEGS (317 aa)) are ribokinase. An ATP-binding site is contributed by 194–197 (NLSE). The active site involves Asp-263. The segment at 343-473 (FTNGCFDILH…TAIVEKIRKN (131 aa)) is cytidylyltransferase.

This sequence in the N-terminal section; belongs to the carbohydrate kinase PfkB family. It in the C-terminal section; belongs to the cytidylyltransferase family. As to quaternary structure, homodimer.

It catalyses the reaction D-glycero-beta-D-manno-heptose 7-phosphate + ATP = D-glycero-beta-D-manno-heptose 1,7-bisphosphate + ADP + H(+). The enzyme catalyses D-glycero-beta-D-manno-heptose 1-phosphate + ATP + H(+) = ADP-D-glycero-beta-D-manno-heptose + diphosphate. The protein operates within nucleotide-sugar biosynthesis; ADP-L-glycero-beta-D-manno-heptose biosynthesis; ADP-L-glycero-beta-D-manno-heptose from D-glycero-beta-D-manno-heptose 7-phosphate: step 1/4. It functions in the pathway nucleotide-sugar biosynthesis; ADP-L-glycero-beta-D-manno-heptose biosynthesis; ADP-L-glycero-beta-D-manno-heptose from D-glycero-beta-D-manno-heptose 7-phosphate: step 3/4. Functionally, catalyzes the phosphorylation of D-glycero-D-manno-heptose 7-phosphate at the C-1 position to selectively form D-glycero-beta-D-manno-heptose-1,7-bisphosphate. In terms of biological role, catalyzes the ADP transfer from ATP to D-glycero-beta-D-manno-heptose 1-phosphate, yielding ADP-D-glycero-beta-D-manno-heptose. The polypeptide is Bifunctional protein HldE (Pseudomonas putida (strain W619)).